The primary structure comprises 123 residues: Small ribosomal subunit protein uS12 (123 aa).

Asp89 carries the 3-methylthioaspartic acid modification.

Belongs to the universal ribosomal protein uS12 family. In terms of assembly, part of the 30S ribosomal subunit. Contacts proteins S8 and S17. May interact with IF1 in the 30S initiation complex.

Functionally, with S4 and S5 plays an important role in translational accuracy. Its function is as follows. Interacts with and stabilizes bases of the 16S rRNA that are involved in tRNA selection in the A site and with the mRNA backbone. Located at the interface of the 30S and 50S subunits, it traverses the body of the 30S subunit contacting proteins on the other side and probably holding the rRNA structure together. The combined cluster of proteins S8, S12 and S17 appears to hold together the shoulder and platform of the 30S subunit. This chain is Small ribosomal subunit protein uS12, found in Phenylobacterium zucineum (strain HLK1).